The primary structure comprises 178 residues: UPF0302 protein Bcer98_1244 (178 aa).

The protein belongs to the UPF0302 family.

The chain is UPF0302 protein Bcer98_1244 from Bacillus cytotoxicus (strain DSM 22905 / CIP 110041 / 391-98 / NVH 391-98).